Consider the following 407-residue polypeptide: Peptidase T (407 aa).

His-77 provides a ligand contact to Zn(2+). The active site involves Asp-79. Asp-138 contacts Zn(2+). The active-site Proton acceptor is the Glu-172. Positions 173, 195, and 377 each coordinate Zn(2+).

This sequence belongs to the peptidase M20B family. Requires Zn(2+) as cofactor.

The protein resides in the cytoplasm. It carries out the reaction Release of the N-terminal residue from a tripeptide.. Functionally, cleaves the N-terminal amino acid of tripeptides. In Aeromonas hydrophila subsp. hydrophila (strain ATCC 7966 / DSM 30187 / BCRC 13018 / CCUG 14551 / JCM 1027 / KCTC 2358 / NCIMB 9240 / NCTC 8049), this protein is Peptidase T.